Consider the following 331-residue polypeptide: Tryptophan--tRNA ligase (331 aa).

ATP contacts are provided by residues glutamine 10 to serine 12 and glycine 18 to asparagine 19. The 'HIGH' region motif lies at proline 11–asparagine 19. An L-tryptophan-binding site is contributed by aspartate 133. ATP is bound by residues glycine 145–aspartate 147, valine 184, and lysine 193–serine 197. The 'KMSKS' region signature appears at lysine 193 to serine 197.

The protein belongs to the class-I aminoacyl-tRNA synthetase family. Homodimer.

The protein localises to the cytoplasm. The catalysed reaction is tRNA(Trp) + L-tryptophan + ATP = L-tryptophyl-tRNA(Trp) + AMP + diphosphate + H(+). In terms of biological role, catalyzes the attachment of tryptophan to tRNA(Trp). This Listeria monocytogenes serotype 4b (strain F2365) protein is Tryptophan--tRNA ligase.